Consider the following 86-residue polypeptide: Putative membrane protein insertion efficiency factor (86 aa).

The protein belongs to the UPF0161 family.

Its subcellular location is the cell inner membrane. Could be involved in insertion of integral membrane proteins into the membrane. This is Putative membrane protein insertion efficiency factor from Histophilus somni (strain 129Pt) (Haemophilus somnus).